Here is a 60-residue protein sequence, read N- to C-terminus: UPF0434 protein YcaR (60 aa).

The protein belongs to the UPF0434 family.

The protein is UPF0434 protein YcaR of Salmonella arizonae (strain ATCC BAA-731 / CDC346-86 / RSK2980).